The primary structure comprises 102 residues: Small ribosomal subunit protein uS10 (102 aa).

It belongs to the universal ribosomal protein uS10 family. As to quaternary structure, part of the 30S ribosomal subunit.

Functionally, involved in the binding of tRNA to the ribosomes. The protein is Small ribosomal subunit protein uS10 of Ligilactobacillus salivarius (strain UCC118) (Lactobacillus salivarius).